The chain runs to 835 residues: Microcephalin (835 aa).

The BRCT 1 domain occupies 1-93; sequence MAAPILKDVV…AHIDESLFPA (93 aa). Phosphoserine is present on residues Ser279, Ser287, Ser296, and Ser333. Disordered regions lie at residues 332–376 and 417–442; these read LSPT…RKRS and SPDN…PAQF. The residue at position 335 (Thr335) is a Phosphothreonine. A compositionally biased stretch (basic residues) spans 343-361; the sequence is LLIHSRPRSSSVKRKRVSH. Ser548 carries the phosphoserine modification. The interval 555–583 is disordered; sequence AVDLKSTQNKGTTSKISNSSEGEAQSEHE. Polar residues predominate over residues 559-577; that stretch reads KSTQNKGTTSKISNSSEGE. 2 BRCT domains span residues 640–730 and 751–833; these read SGRG…PFEL and YRGT…NYLL.

In terms of assembly, interacts with CDC27 and maybe other components of the APC/C complex. Interacts with histone variant H2AX under DNA damage conditions.

It localises to the cytoplasm. Its subcellular location is the cytoskeleton. The protein localises to the microtubule organizing center. The protein resides in the centrosome. In terms of biological role, implicated in chromosome condensation and DNA damage induced cellular responses. May play a role in neurogenesis and regulation of the size of the cerebral cortex. This is Microcephalin from Pan troglodytes (Chimpanzee).